Reading from the N-terminus, the 629-residue chain is Dehydrogenase pyvF (629 aa).

A signal peptide spans 1–22; it reads MAGSPFTTALLSAWTLSTVAVG. FAD contacts are provided by residues 61–62 and 82–83; these read AS and EA. N-linked (GlcNAc...) asparagine glycosylation is present at Asn-92. 144 to 147 lines the FAD pocket; that stretch reads NLMA. N-linked (GlcNAc...) asparagine glycosylation is found at Asn-172, Asn-182, Asn-256, Asn-284, Asn-312, and Asn-421. Residue His-552 is the Proton acceptor of the active site. Residues Ala-586 and 597 to 598 each bind FAD; that span reads PL.

Belongs to the GMC oxidoreductase family. Homodimer. Requires FAD as cofactor.

It functions in the pathway secondary metabolite biosynthesis. Functionally, dehydrogenase; part of the gene cluster that mediates the biosynthesis of pyranoviolin A, a pyranonigrin analog with a C-3 methoxy group. Initially, the PKS portion of pyvA synthesizes C-10 carbon chain from 5 molecules of malonyl-CoA, which is then condensed with the thiolation (T) domain-bound glycine activated by the adenylation (A) domain. The subsequent chain release by Dieckmann condensation (DKC) could be catalyzed by the TE domain present at the C-terminus of pyvA and/or the alpha/beta hydrolase pyvD, installing the tetramic acid moiety. The FAD-dependent monooxygenase pyvC next epoxidizes one of the olefins of the polyketide part, and the epoxide ring-opening induces the dihydro-gamma-pyrone ring formation. The cytochrome P450 monooxygeanse pyvB would be responsible for the 2 consecutive reactions, in which the dihydro-gamma-pyrone is oxidized to gamma-pyrone and C-7 is hydroxylated to yield pyranonigrin F. Finally, the O-methyltransferase pyvH methylates the C-3 hydroxy group to complete the biosynthesis. This Aspergillus violaceofuscus (strain CBS 115571) protein is Dehydrogenase pyvF.